Here is a 384-residue protein sequence, read N- to C-terminus: Cysteine protease ATG4B (384 aa).

Cysteine 74 serves as the catalytic Nucleophile. Catalysis depends on residues aspartate 269 and histidine 271. Positions phenylalanine 379–leucine 382 match the LIR motif.

It belongs to the peptidase C54 family.

The protein localises to the cytoplasm. The protein resides in the cytosol. It is found in the cytoplasmic vesicle. Its subcellular location is the autophagosome. It localises to the endoplasmic reticulum. The protein localises to the mitochondrion. The catalysed reaction is [protein]-C-terminal L-amino acid-glycyl-phosphatidylethanolamide + H2O = [protein]-C-terminal L-amino acid-glycine + a 1,2-diacyl-sn-glycero-3-phosphoethanolamine. It carries out the reaction [protein]-C-terminal L-amino acid-glycyl-phosphatidylserine + H2O = [protein]-C-terminal L-amino acid-glycine + a 1,2-diacyl-sn-glycero-3-phospho-L-serine. Functionally, cysteine protease that plays a key role in autophagy by mediating both proteolytic activation and delipidation of ATG8 family proteins. Required for canonical autophagy (macroautophagy), non-canonical autophagy as well as for mitophagy. The protease activity is required for proteolytic activation of ATG8 family proteins: cleaves the C-terminal amino acid of ATG8 proteins to reveal a C-terminal glycine. Exposure of the glycine at the C-terminus is essential for ATG8 proteins conjugation to phosphatidylethanolamine (PE) and insertion to membranes, which is necessary for autophagy. Protease activity is also required to counteract formation of high-molecular weight conjugates of ATG8 proteins (ATG8ylation): acts as a deubiquitinating-like enzyme that removes ATG8 conjugated to other proteins, such as ATG3. In addition to the protease activity, also mediates delipidation of ATG8 family proteins. Catalyzes delipidation of PE-conjugated forms of ATG8 proteins during macroautophagy. Also involved in non-canonical autophagy, a parallel pathway involving conjugation of ATG8 proteins to single membranes at endolysosomal compartments, by catalyzing delipidation of ATG8 proteins conjugated to phosphatidylserine (PS). The polypeptide is Cysteine protease ATG4B (Xenopus laevis (African clawed frog)).